A 230-amino-acid polypeptide reads, in one-letter code: MERRRGTVPLGWVFFVLCLSASSSCAVDLGSKSSNSTCRLNVTELASIHPGETWTLHGMCISICYYENVTEDEIIGVAFTWQHNESVVDLWLYQNDTVIRNFSDITTNILQDGLKMRTVPVTKLYTSRMVTNLTVGRYDCLRCENGTTKIIERLYVRLGSLYPRPPGSGLAKHPSVSADEELSATLARDIVLVSAITLFFFLLALRIPQRLCQRLRIRLPHRYQRLRTED.

A signal peptide spans 1–26 (MERRRGTVPLGWVFFVLCLSASSSCA). Over 27–184 (VDLGSKSSNS…SVSADEELSA (158 aa)) the chain is Extracellular. N-linked (GlcNAc...) asparagine; by host glycosylation is found at Asn35, Asn41, Asn68, Asn84, Asn95, Asn101, Asn132, and Asn145. Residues 185 to 205 (TLARDIVLVSAITLFFFLLAL) traverse the membrane as a helical segment. Residues 206 to 230 (RIPQRLCQRLRIRLPHRYQRLRTED) lie on the Cytoplasmic side of the membrane.

This sequence belongs to the HHV-5 UL16 protein family. Interacts with host ULBP1, ULBP2 and MICB.

The protein localises to the host membrane. Plays a role in escape from host immune response. Blocks the interaction between the host KLRK1 receptor with the ligands ULBP1 and ULBP2. ULBPs activate multiple signaling pathways in primary NK cells, resulting in the production of cytokines and chemokines. The sequestration of diverse KLRK1 ligands in the endoplasmic reticulum and cis-Golgi apparatus of cells by UL16 inhibits the activation of NK cells. This is Protein UL16 (UL16) from Human cytomegalovirus (strain AD169) (HHV-5).